The following is a 196-amino-acid chain: Large ribosomal subunit protein uL5 (196 aa).

It belongs to the universal ribosomal protein uL5 family. In terms of assembly, part of the 50S ribosomal subunit; part of the 5S rRNA/L5/L18/L25 subcomplex. Contacts the 5S rRNA and the P site tRNA. Forms a bridge to the 30S subunit in the 70S ribosome.

Its function is as follows. This is one of the proteins that bind and probably mediate the attachment of the 5S RNA into the large ribosomal subunit, where it forms part of the central protuberance. In the 70S ribosome it contacts protein S13 of the 30S subunit (bridge B1b), connecting the 2 subunits; this bridge is implicated in subunit movement. Contacts the P site tRNA; the 5S rRNA and some of its associated proteins might help stabilize positioning of ribosome-bound tRNAs. The protein is Large ribosomal subunit protein uL5 of Chlorobium phaeobacteroides (strain BS1).